We begin with the raw amino-acid sequence, 606 residues long: Mitogen-activated protein kinase 20 (606 aa).

One can recognise a Protein kinase domain in the interval 25–316 (FKVQEVIGKG…AEEALADPYF (292 aa)). ATP contacts are provided by residues 31 to 39 (IGKGSYGVV) and Lys54. The active-site Proton acceptor is the Asp151. Thr187 is modified (phosphothreonine). Positions 187–189 (TDY) match the TXY motif. Tyr189 is subject to Phosphotyrosine. Thr192 is subject to Phosphothreonine.

Belongs to the protein kinase superfamily. CMGC Ser/Thr protein kinase family. MAP kinase subfamily. Dually phosphorylated on Thr-187 and Tyr-189, which activates the enzyme.

The catalysed reaction is L-seryl-[protein] + ATP = O-phospho-L-seryl-[protein] + ADP + H(+). It carries out the reaction L-threonyl-[protein] + ATP = O-phospho-L-threonyl-[protein] + ADP + H(+). Activated by threonine and tyrosine phosphorylation. This chain is Mitogen-activated protein kinase 20 (MPK20), found in Arabidopsis thaliana (Mouse-ear cress).